Reading from the N-terminus, the 99-residue chain is Carboxysome shell vertex protein CcmL (99 aa).

One can recognise a BMV domain in the interval 1 to 83 (MRIAKVRGTV…VDAAVIAIID (83 aa)).

The protein belongs to the CcmL/EutN family. CcmL subfamily. As to quaternary structure, homopentamer. Interacts with full-length CcmM.

Its subcellular location is the carboxysome. Functionally, probably forms vertices in the carboxysome, a polyhedral inclusion where RuBisCO (ribulose bisphosphate carboxylase, rbcL-rbcS) is sequestered. Has been modeled to induce curvature upon insertion into an otherwise flat hexagonal molecular layer of CcmK subunits. In terms of biological role, beta-carboxysome assembly initiates when soluble RuBisCO is condensed into a liquid matrix in a pre-carboxysome by the RbcS-like domains of probably both CcmM58 and CcmM35. CcmN interacts with the N-terminus of CcmM58, and then recruits the CcmK2 major shell protein via CcmN's encapsulation peptide. Shell formation requires CcmK proteins and CcmO. CcmL caps the otherwise elongated carboxysome. Once fully encapsulated carboxysomes are formed, they migrate within the cell probably via interactions with the cytoskeleton. The chain is Carboxysome shell vertex protein CcmL from Synechococcus elongatus (strain ATCC 33912 / PCC 7942 / FACHB-805) (Anacystis nidulans R2).